The sequence spans 425 residues: MASSNLIKQLQERGLVAQVTDENALAERLAQGPIALYCGFDPTADSLHLGHLVPLLCLKRFQDAGHKPVALVGGATGLIGDPSFKAAERKLNTSETVNQWVEKIRQQVAPFLSFNCGDNSAIAANNYDWFGSMNVLTFLRDIGKHFSVNQMINKEAVKQRLNRDDQGISFTEFSYNLLQGYDFACLNERYGVALQIGGSDQWGNITSGIDLTRRLHQNQVFGLTVPLITKSDGTKFGKTEGGAVWLDAAKTSPYKFYQFWINTADADVYRFLKFFTFMSLEEINQLEEEDKSSGKAPRAQGVLAELVTRLVHGEEGLIAAQRITRSLFAGNVTELTANDLSQLAQDGMPGIELKIGQDLQQALVNAELAPSRGQARKLIEAKSVSINGSLQTDAEYTFGEDDRLFGQYTLLRRGKKNYSLISWQS.

An L-tyrosine-binding site is contributed by tyrosine 37. The 'HIGH' region motif lies at 42 to 51 (PTADSLHLGH). 2 residues coordinate L-tyrosine: tyrosine 175 and glutamine 179. The 'KMSKS' region motif lies at 235–239 (KFGKT). Position 238 (lysine 238) interacts with ATP. Positions 357–415 (QDLQQALVNAELAPSRGQARKLIEAKSVSINGSLQTDAEYTFGEDDRLFGQYTLLRRGK) constitute an S4 RNA-binding domain.

Belongs to the class-I aminoacyl-tRNA synthetase family. TyrS type 1 subfamily. In terms of assembly, homodimer.

It is found in the cytoplasm. The catalysed reaction is tRNA(Tyr) + L-tyrosine + ATP = L-tyrosyl-tRNA(Tyr) + AMP + diphosphate + H(+). In terms of biological role, catalyzes the attachment of tyrosine to tRNA(Tyr) in a two-step reaction: tyrosine is first activated by ATP to form Tyr-AMP and then transferred to the acceptor end of tRNA(Tyr). The sequence is that of Tyrosine--tRNA ligase from Erwinia tasmaniensis (strain DSM 17950 / CFBP 7177 / CIP 109463 / NCPPB 4357 / Et1/99).